The sequence spans 465 residues: MDRMEIDDQAGIDFVTESINSERARNRWSTSHIPSLSEINPSSFQSPSPSPFASSTSLASKPARYSKPLGLFVLDTNFLLSHLSLCQNLIEFLTARCPRLVVVLPWTVLQELDGLKSESSSTCGYLARQAHNFLLQCFRSNVSSLRGQKVHEHCSSTEKGDDAILDCCIYYQEEKLIPAVLLSDDKNLSIKAAVHHIQSLSFSKGLEAASIVQTSFPSAFSSNSENLENLSMDIDLTVSQPLATATNHRNQGASTVDIPMDRTHDNSIWASRYAHFPPYDKKKDTTRSAADYIPYTYTALTKEEILHASHPRACKLLDQITKIMVEETAFLLSRHLLKLWGDYDLAMTKLLASPQFPPQNINDVGHELYIHWYTCFDGYLPAQERSNLKSKAELWNEWMLWAERGIGIGPKNQEELQTYVTFWSNIWTLLSRREILGDQASTYIGFREQNIEKWVERSGRERILS.

The PINc domain maps to 70–190; that stretch reads GLFVLDTNFL…LLSDDKNLSI (121 aa).

Belongs to the SWT1 family.

It is found in the cytoplasm. It localises to the nucleus. In terms of biological role, involved in transcription. The chain is Transcriptional protein swt1 from Schizosaccharomyces pombe (strain 972 / ATCC 24843) (Fission yeast).